A 605-amino-acid polypeptide reads, in one-letter code: Pescadillo homolog (605 aa).

Residues proline 346–proline 440 form the BRCT domain. The disordered stretch occupies residues serine 449–lysine 553. Over residues alanine 461 to glutamate 508 the composition is skewed to acidic residues. Basic and acidic residues predominate over residues glutamate 526–aspartate 537. Positions serine 533–lysine 605 form a coiled coil.

Belongs to the pescadillo family. In terms of assembly, component of the NOP7 complex, composed of ERB1, NOP7 and YTM1. The complex is held together by ERB1, which interacts with NOP7 via its N-terminal domain and with YTM1 via a high-affinity interaction between the seven-bladed beta-propeller domains of the 2 proteins. The NOP7 complex associates with the 66S pre-ribosome.

Its subcellular location is the nucleus. The protein localises to the nucleolus. It is found in the nucleoplasm. Functionally, component of the NOP7 complex, which is required for maturation of the 25S and 5.8S ribosomal RNAs and formation of the 60S ribosome. In Kluyveromyces lactis (strain ATCC 8585 / CBS 2359 / DSM 70799 / NBRC 1267 / NRRL Y-1140 / WM37) (Yeast), this protein is Pescadillo homolog.